The primary structure comprises 201 residues: Ras-related protein Rab-9B (201 aa).

GTP contacts are provided by V18, G19, K20, S21, S22, D33, S34, A36, H38, and T39. S21 contacts Mg(2+). A Switch 1 motif is present at residues 31–42 (KFDSQAFHTIGV). S34 bears the Phosphoserine mark. 2 residues coordinate Mg(2+): T39 and D62. The Switch 2 motif lies at 64 to 78 (AGQERFKSLRTPFYR). Positions 65, 124, 125, 155, and 156 each coordinate GTP. S-geranylgeranyl cysteine attachment occurs at residues C200 and C201.

Belongs to the small GTPase superfamily. Rab family. Interacts (GTP-bound form) with SGSM1; the GDP-bound form has much lower affinity for SGSM1. The GTP-bound form but not the GDP-bound form interacts with HPS4 and the BLOC-3 complex (heterodimer of HPS1 and HPS4) but does not interact with HPS1 alone. Interacts (GTP-bound form) with NDE1. Mg(2+) serves as cofactor. In terms of tissue distribution, ubiquitous.

The protein resides in the cell membrane. It is found in the cytoplasmic vesicle. The protein localises to the phagosome. Its subcellular location is the phagosome membrane. The enzyme catalyses GTP + H2O = GDP + phosphate + H(+). With respect to regulation, regulated by guanine nucleotide exchange factors (GEFs) which promote the exchange of bound GDP for free GTP. Regulated by GTPase activating proteins (GAPs) which increase the GTP hydrolysis activity. Inhibited by GDP dissociation inhibitors (GDIs). The small GTPases Rab are key regulators of intracellular membrane trafficking, from the formation of transport vesicles to their fusion with membranes. Rabs cycle between an inactive GDP-bound form and an active GTP-bound form that is able to recruit to membranes different sets of downstream effectors directly responsible for vesicle formation, movement, tethering and fusion. RAB9B is involved in the transport of proteins between the endosomes and the trans Golgi network. May use NDE1/NDEL1 as an effector to interact with the dynein motor complex in order to control retrograde trafficking of RAB9-associated late endosomes to the TGN. This chain is Ras-related protein Rab-9B, found in Homo sapiens (Human).